A 434-amino-acid chain; its full sequence is Methylenetetrahydrofolate--tRNA-(uracil-5-)-methyltransferase TrmFO (434 aa).

Residue Gly10–Gly15 coordinates FAD.

Belongs to the MnmG family. TrmFO subfamily. It depends on FAD as a cofactor.

The protein localises to the cytoplasm. It carries out the reaction uridine(54) in tRNA + (6R)-5,10-methylene-5,6,7,8-tetrahydrofolate + NADH + H(+) = 5-methyluridine(54) in tRNA + (6S)-5,6,7,8-tetrahydrofolate + NAD(+). The catalysed reaction is uridine(54) in tRNA + (6R)-5,10-methylene-5,6,7,8-tetrahydrofolate + NADPH + H(+) = 5-methyluridine(54) in tRNA + (6S)-5,6,7,8-tetrahydrofolate + NADP(+). In terms of biological role, catalyzes the folate-dependent formation of 5-methyl-uridine at position 54 (M-5-U54) in all tRNAs. The protein is Methylenetetrahydrofolate--tRNA-(uracil-5-)-methyltransferase TrmFO of Bacillus cereus (strain G9842).